Here is a 214-residue protein sequence, read N- to C-terminus: Orotate phosphoribosyltransferase (214 aa).

5-phospho-alpha-D-ribose 1-diphosphate is bound at residue lysine 26. 34 to 35 (FF) serves as a coordination point for orotate. Residues 72 to 73 (YK), arginine 99, lysine 100, lysine 103, histidine 105, and 124 to 132 (DDVITAGTA) contribute to the 5-phospho-alpha-D-ribose 1-diphosphate site. Residues threonine 128 and arginine 157 each coordinate orotate.

The protein belongs to the purine/pyrimidine phosphoribosyltransferase family. PyrE subfamily. Homodimer. The cofactor is Mg(2+).

The catalysed reaction is orotidine 5'-phosphate + diphosphate = orotate + 5-phospho-alpha-D-ribose 1-diphosphate. Its pathway is pyrimidine metabolism; UMP biosynthesis via de novo pathway; UMP from orotate: step 1/2. In terms of biological role, catalyzes the transfer of a ribosyl phosphate group from 5-phosphoribose 1-diphosphate to orotate, leading to the formation of orotidine monophosphate (OMP). This chain is Orotate phosphoribosyltransferase, found in Pseudomonas fluorescens (strain ATCC BAA-477 / NRRL B-23932 / Pf-5).